The following is a 310-amino-acid chain: DNA repair nuclease APEX1 (310 aa).

The interval 1-51 is disordered; sequence MPKRAKKNEEGVDGEADNGTAAAKKEKKGKEPEAPILYEDPPEKLTSKDGR. Residues 41 to 51 show a composition bias toward basic and acidic residues; that stretch reads PPEKLTSKDGR. 2 residues coordinate Mg(2+): Asp63 and Glu89. Residue Tyr164 is part of the active site. Mg(2+) contacts are provided by Asp203, Asn205, and Asp300. Residue Asp203 is the Proton donor/acceptor of the active site.

It belongs to the DNA repair enzymes AP/ExoA family. Requires Mg(2+) as cofactor. The cofactor is Mn(2+).

The protein resides in the nucleus. It is found in the nucleolus. It localises to the nucleus speckle. Its subcellular location is the endoplasmic reticulum. The protein localises to the cytoplasm. The protein resides in the mitochondrion. The catalysed reaction is Exonucleolytic cleavage in the 3'- to 5'-direction to yield nucleoside 5'-phosphates.. Functions as an apurinic/apyrimidinic (AP) endodeoxyribonuclease in the DNA base excision repair (BER) pathway of DNA lesions induced by oxidative and alkylating agents. Initiates repair of AP sites in DNA by catalyzing hydrolytic incision of the phosphodiester backbone immediately adjacent to the damage, generating a single-strand break with 5'-deoxyribose phosphate and 3'-hydroxyl ends. Has 3'-5' exoribonuclease activity on mismatched deoxyribonucleotides at the 3' termini of nicked or gapped DNA molecules during short-patch BER. May also play a role in the epigenetic regulation of gene expression by participating in DNA demethylation. Required for passage through the mid-blastula transition MBT. May also act as an endoribonuclease involved in the control of single-stranded RNA metabolism. Has no redox activity. Binds DNA and RNA. This Danio rerio (Zebrafish) protein is DNA repair nuclease APEX1 (apex1).